We begin with the raw amino-acid sequence, 92 residues long: C-C motif chemokine 3 (92 aa).

The N-terminal stretch at 1–26 (MQVSTAALAVLLCTVALCNRISATFA) is a signal peptide. 2 disulfides stabilise this stretch: Cys-33-Cys-57 and Cys-34-Cys-73.

This sequence belongs to the intercrine beta (chemokine CC) family. As to quaternary structure, self-associates. Also heterodimer of MIP-1-alpha(4-69) and MIP-1-beta(3-69). Interacts with CCR1.

It localises to the secreted. Its function is as follows. Monokine with inflammatory and chemokinetic properties. Binds to CCR1, CCR4 and CCR5. One of the major HIV-suppressive factors produced by CD8+ T-cells. Recombinant MIP-1-alpha induces a dose-dependent inhibition of different strains of HIV-1, HIV-2, and simian immunodeficiency virus (SIV). In Macaca mulatta (Rhesus macaque), this protein is C-C motif chemokine 3 (CCL3).